The following is a 415-amino-acid chain: NEDD8-specific protease 2 (415 aa).

The interval 1–42 (MRSNSIFTKEIDSEAVKKSSNLRPPSTGSSNSNGSDTASPKK) is disordered. Residues 26–38 (STGSSNSNGSDTA) are compositionally biased toward low complexity. Residue Ser-35 is modified to Phosphoserine. Active-site residues include His-171, Asp-188, and Cys-229. Residues 320–415 (AVTSDSAQPH…QHTQQSIEIH (96 aa)) are disordered. 3 stretches are compositionally biased toward polar residues: residues 335 to 368 (MPSSQPQSRSESLPLTHPNSEPNPKLDSQPNSSP), 379 to 390 (TASTSVLPTSIL), and 405 to 415 (IQHTQQSIEIH). A Phosphoserine modification is found at Ser-367.

It belongs to the peptidase C48 family.

It is found in the cytoplasm. The protein localises to the nucleus. Protease that catalyzes two essential functions in the NEDD8 pathway: processing of full-length NEDD8 to its mature form and deconjugation of NEDD8 from targeted proteins such as the pcu1, pcu2 and pcu4 cullins and other proteins. Has a role in meiosis. This is NEDD8-specific protease 2 (nep2) from Schizosaccharomyces pombe (strain 972 / ATCC 24843) (Fission yeast).